Consider the following 478-residue polypeptide: Adenosylhomocysteinase (478 aa).

Thr-56, Asp-139, and Glu-201 together coordinate substrate. 202-204 (TTT) is an NAD(+) binding site. Substrate contacts are provided by Lys-231 and Asp-235. NAD(+) contacts are provided by residues Asn-236, 265-270 (GYGDVG), Glu-288, Asn-323, 344-346 (IGH), and Asn-392.

This sequence belongs to the adenosylhomocysteinase family. NAD(+) serves as cofactor.

It localises to the cytoplasm. It catalyses the reaction S-adenosyl-L-homocysteine + H2O = L-homocysteine + adenosine. It functions in the pathway amino-acid biosynthesis; L-homocysteine biosynthesis; L-homocysteine from S-adenosyl-L-homocysteine: step 1/1. Functionally, may play a key role in the regulation of the intracellular concentration of adenosylhomocysteine. This chain is Adenosylhomocysteinase, found in Corynebacterium diphtheriae (strain ATCC 700971 / NCTC 13129 / Biotype gravis).